We begin with the raw amino-acid sequence, 240 residues long: UDP-2,3-diacylglucosamine hydrolase (240 aa).

Asp-8, His-10, Asp-41, Asn-79, and His-114 together coordinate Mn(2+). A substrate-binding site is contributed by 79–80; sequence NR. Positions 122, 160, 164, 167, and 195 each coordinate substrate. The Mn(2+) site is built by His-195 and His-197.

It belongs to the LpxH family. Mn(2+) serves as cofactor.

The protein resides in the cell inner membrane. It catalyses the reaction UDP-2-N,3-O-bis[(3R)-3-hydroxytetradecanoyl]-alpha-D-glucosamine + H2O = 2-N,3-O-bis[(3R)-3-hydroxytetradecanoyl]-alpha-D-glucosaminyl 1-phosphate + UMP + 2 H(+). It participates in glycolipid biosynthesis; lipid IV(A) biosynthesis; lipid IV(A) from (3R)-3-hydroxytetradecanoyl-[acyl-carrier-protein] and UDP-N-acetyl-alpha-D-glucosamine: step 4/6. Its function is as follows. Hydrolyzes the pyrophosphate bond of UDP-2,3-diacylglucosamine to yield 2,3-diacylglucosamine 1-phosphate (lipid X) and UMP by catalyzing the attack of water at the alpha-P atom. Involved in the biosynthesis of lipid A, a phosphorylated glycolipid that anchors the lipopolysaccharide to the outer membrane of the cell. The chain is UDP-2,3-diacylglucosamine hydrolase from Yersinia pestis bv. Antiqua (strain Angola).